Reading from the N-terminus, the 430-residue chain is DD-carboxypeptidase/endopeptidase Mpg (430 aa).

Residues His-295, Asp-299, and His-375 each coordinate Zn(2+).

It belongs to the peptidase M23B family. Monomer. Zn(2+) serves as cofactor. In terms of processing, likely to be synthesized as a proenzyme. The cleavage of the N-terminal domain is probably required for the activation of the enzyme.

It is found in the cell outer membrane. Has both endopeptidase and DD-carboxypeptidase activities. Degrades cell wall peptidoglycan (PG) to allow consummate expression of pili. The protein is DD-carboxypeptidase/endopeptidase Mpg of Neisseria meningitidis serogroup B (strain ATCC 13091 / M2091).